Here is a 126-residue protein sequence, read N- to C-terminus: MGQSTNPRRVADNEARAKLRMIRTSPQKLNLVAALIRGKKVERALADLEFSRKRISKEVKKTLESAIANAENNHGLDIDSLVVSEAFVGKNLVMKRFRARARGRGAKILKPFSELTIVVREVEEAA.

It belongs to the universal ribosomal protein uL22 family. As to quaternary structure, part of the 50S ribosomal subunit.

This protein binds specifically to 23S rRNA; its binding is stimulated by other ribosomal proteins, e.g. L4, L17, and L20. It is important during the early stages of 50S assembly. It makes multiple contacts with different domains of the 23S rRNA in the assembled 50S subunit and ribosome. Its function is as follows. The globular domain of the protein is located near the polypeptide exit tunnel on the outside of the subunit, while an extended beta-hairpin is found that lines the wall of the exit tunnel in the center of the 70S ribosome. The sequence is that of Large ribosomal subunit protein uL22 from Maricaulis maris (strain MCS10) (Caulobacter maris).